A 37-amino-acid chain; its full sequence is Photosystem II reaction center protein K (37 aa).

At 1-15 the chain is on the lumenal side; that stretch reads KLPEAYAIFDPLVDV. The chain crosses the membrane as a helical span at residues 16-30; that stretch reads LPVIPVLFFALAFVV. Topologically, residues 31-37 are cytoplasmic; that stretch reads QAAVGFR.

The protein belongs to the PsbK family. PSII is composed of 1 copy each of membrane proteins PsbA, PsbB, PsbC, PsbD, PsbE, PsbF, PsbH, PsbI, PsbJ, PsbK, PsbL, PsbM, PsbT, PsbX, PsbY, PsbZ, Psb30/Ycf12, peripheral proteins PsbO, CyanoQ (PsbQ), PsbU, PsbV and a large number of cofactors. It forms dimeric complexes. PSII binds multiple chlorophylls, carotenoids and specific lipids. is required as a cofactor.

It is found in the cellular thylakoid membrane. One of the components of the core complex of photosystem II (PSII). PSII is a light-driven water:plastoquinone oxidoreductase that uses light energy to abstract electrons from H(2)O, generating O(2) and a proton gradient subsequently used for ATP formation. It consists of a core antenna complex that captures photons, and an electron transfer chain that converts photonic excitation into a charge separation. The protein is Photosystem II reaction center protein K of Thermostichus vulcanus (Synechococcus vulcanus).